We begin with the raw amino-acid sequence, 185 residues long: Ribosome-recycling factor (185 aa).

It belongs to the RRF family.

The protein resides in the cytoplasm. Functionally, responsible for the release of ribosomes from messenger RNA at the termination of protein biosynthesis. May increase the efficiency of translation by recycling ribosomes from one round of translation to another. This is Ribosome-recycling factor from Shewanella sp. (strain MR-4).